The primary structure comprises 315 residues: ATP synthase gamma chain (315 aa).

It belongs to the ATPase gamma chain family. In terms of assembly, F-type ATPases have 2 components, CF(1) - the catalytic core - and CF(0) - the membrane proton channel. CF(1) has five subunits: alpha(3), beta(3), gamma(1), delta(1), epsilon(1). CF(0) has three main subunits: a, b and c.

The protein localises to the cellular thylakoid membrane. Functionally, produces ATP from ADP in the presence of a proton gradient across the membrane. The gamma chain is believed to be important in regulating ATPase activity and the flow of protons through the CF(0) complex. The chain is ATP synthase gamma chain from Nostoc punctiforme (strain ATCC 29133 / PCC 73102).